A 380-amino-acid polypeptide reads, in one-letter code: Tetratricopeptide repeat protein 19, mitochondrial (380 aa).

A mitochondrion-targeting transit peptide spans 1–70 (MFRLLSWSLG…AALAWFSRPA (70 aa)). TPR repeat units follow at residues 136 to 169 (TYTY…LLGG), 179 to 212 (IEIS…LEEK), 237 to 270 (GMCL…SEEI), 279 to 312 (IVLM…ARQI), and 318 to 351 (HMVL…AKLK).

The protein belongs to the TTC19 family. Binds to the mature mitochondrial complex III dimer, after the incorporation of the Rieske protein UQCRFS1. Interacts with UQCRC1 and UQCRFS1. Interacts with ZFYVE26 and CHMP4B. In terms of processing, proteolytically cleaved by PARL.

It is found in the mitochondrion inner membrane. Its function is as follows. Required for the preservation of the structural and functional integrity of mitochondrial respiratory complex III by allowing the physiological turnover of the Rieske protein UQCRFS1. Involved in the clearance of UQCRFS1 N-terminal fragments, which are produced upon incorporation of UQCRFS1 into the complex III and whose presence is detrimental for its catalytic activity. In Homo sapiens (Human), this protein is Tetratricopeptide repeat protein 19, mitochondrial (TTC19).